The primary structure comprises 1223 residues: WD repeat-containing protein 11 (1223 aa).

2 WD repeats span residues 59-108 (KHKA…AQCE) and 111-154 (EHVK…KLWK). Residues S205 and S209 each carry the phosphoserine modification. One copy of the WD 3 repeat lies at 354 to 393 (KTVRPFSMVCCPVNENAAALIVSDGRVMIWELKSAVCSRN). S401 and S405 each carry phosphoserine. 6 WD repeats span residues 470–509 (RMCPPLTTKNIKTYQPLLAVGTSNGSVLVYHLTSGLLHKE), 565–604 (NDESPIEMIKVSHLKQYLAVVFKDKPLELWDIRTCTLLRE), 707–744 (GSMGSITCIAWKGDTLVLGDMDGNLNFWDLKARVSRGI), 746–786 (THRS…MVSS), 792–830 (NVTFRILDVDWCTSDKVILASDDGCIRVLEMSMKSTCFR), and 892–939 (ALSN…HSLS).

As to quaternary structure, component of the complex WDR11 composed of C17orf75, FAM91A1 and WDR11; FAM91A1 and WDR11 are required for proper location of the complex. Interacts with GLI3; the interaction associateS EMX1 with GLI3. Interacts with TBC1D23; this interaction may be indirect and recruits TBC1D23 to AP-1-derived vesicles. Interacts (via the N-terminal and the central portion of the protein) with EMX1. As to expression, broadly expressed in various organs including brain, eye,ear, lung, heart, kideny and gonads. Cerebral cortex. The entire developing central nervous system, except for the spinal cord, reveals expression. Expressed in the neuroepithelium, including the diencephalic region that gives rise to hypothalamic neurons. In the adult brain, intense expression is restricted to the olfactory bulb, the olfaction-related piriform cortex, the granule cell layer of the cerebellum, and neurons of the hippocampal formation. The brain demonstrated expression scattered throughout the hypothalamus, sometimes in clusters of neurons.

It localises to the cytoplasm. The protein resides in the cytoskeleton. Its subcellular location is the cilium basal body. It is found in the nucleus. The protein localises to the cilium axoneme. It localises to the cytoplasmic vesicle. The protein resides in the golgi apparatus. Its subcellular location is the trans-Golgi network. Involved in the Hedgehog (Hh) signaling pathway, is essential for normal ciliogenesis. Regulates the proteolytic processing of GLI3 and cooperates with the transcription factor EMX1 in the induction of downstream Hh pathway gene expression and gonadotropin-releasing hormone production. WDR11 complex facilitates the tethering of Adaptor protein-1 complex (AP-1)-derived vesicles. WDR11 complex acts together with TBC1D23 to facilitate the golgin-mediated capture of vesicles generated using AP-1. In Mus musculus (Mouse), this protein is WD repeat-containing protein 11 (Wdr11).